Consider the following 169-residue polypeptide: Peptide deformylase (169 aa).

C94 and H136 together coordinate Fe cation. The active site involves E137. H140 is a Fe cation binding site.

It belongs to the polypeptide deformylase family. Requires Fe(2+) as cofactor.

The enzyme catalyses N-terminal N-formyl-L-methionyl-[peptide] + H2O = N-terminal L-methionyl-[peptide] + formate. Functionally, removes the formyl group from the N-terminal Met of newly synthesized proteins. Requires at least a dipeptide for an efficient rate of reaction. N-terminal L-methionine is a prerequisite for activity but the enzyme has broad specificity at other positions. This Phenylobacterium zucineum (strain HLK1) protein is Peptide deformylase.